A 299-amino-acid polypeptide reads, in one-letter code: MGKEEEIARIARRLDKMVTRKNAEGAMDLLRELKNMPITLHLLQSTRVGMSVNALRKQSSDEELIALAKSLIKSWKKLLDVSDGKSRNQGRGTPLPTSSSKDASRTTDLSCKKPDPPRTPSTPRITTFPQVPITCDAVRNKCREMLTLALQTDHDHVAVGVNCEHLSSQIEECIFLDVGNTDMKYKNRVRSRISNLKDAKNPGLRRNVLCGAITPQQIAVMTSEEMASDELKEIRKAMTKEAIREHQMARTGGTQTDLFTCNKCRKKNCTYTQVQTRSSDEPMTTYVVCNECGNRWKFC.

Residues 5-82 (EEIARIARRL…KSWKKLLDVS (78 aa)) form the TFIIS N-terminal domain. Lysine 57 participates in a covalent cross-link: Glycyl lysine isopeptide (Lys-Gly) (interchain with G-Cter in ubiquitin). Phosphoserine occurs at positions 59 and 100. The segment at 82–127 (SDGKSRNQGRGTPLPTSSSKDASRTTDLSCKKPDPPRTPSTPRITT) is disordered. The segment covering 87–101 (RNQGRGTPLPTSSSK) has biased composition (polar residues). Basic and acidic residues predominate over residues 102 to 116 (DASRTTDLSCKKPDP). Residues 138–254 (VRNKCREMLT…EHQMARTGGT (117 aa)) form the TFIIS central domain. A TFIIS-type zinc finger spans residues 257-297 (DLFTCNKCRKKNCTYTQVQTRSSDEPMTTYVVCNECGNRWK). Cysteine 261, cysteine 264, cysteine 289, and cysteine 292 together coordinate Zn(2+).

Belongs to the TFS-II family. In terms of assembly, interacts with the basal transcription factor GTF2B. Interacts with REXO1. In terms of tissue distribution, testis and ovary specific. Specific to testicular germ cells.

The protein resides in the nucleus. Necessary for efficient RNA polymerase II transcription elongation past template-encoded arresting sites. The arresting sites in DNA have the property of trapping a certain fraction of elongating RNA polymerases that pass through, resulting in locked ternary complexes. Cleavage of the nascent transcript by S-II allows the resumption of elongation from the new 3'-terminus. This is Transcription elongation factor A protein 2 (Tcea2) from Mus musculus (Mouse).